Here is a 258-residue protein sequence, read N- to C-terminus: Putative cysteine-rich repeat secretory protein 35 (258 aa).

A signal peptide spans 1–29; sequence MYSSYSLSKRLIYVPILAIQFLLVRSVSS. Gnk2-homologous domains follow at residues 36-138 and 146-255; these read YLNH…TIKP and FKNT…LYPF.

It belongs to the cysteine-rich repeat secretory protein family.

The protein resides in the secreted. This Arabidopsis thaliana (Mouse-ear cress) protein is Putative cysteine-rich repeat secretory protein 35 (CRRSP35).